The primary structure comprises 638 residues: E3 ubiquitin-protein ligase TRIM47 (638 aa).

The residue at position 1 (M1) is an N-acetylmethionine. An RING-type zinc finger spans residues 9–58 (CPICLEPLREPVTLPCGHNFCLACLGALWPHRGASGAGGPGGAARCPLCQ). At T72 the chain carries Phosphothreonine. A disordered region spans residues 79 to 119 (LRQGSGPGSGPGPAPALAPEPSAPSALPSVPEPSAPCAPEP). Pro residues-rich tracts occupy residues 88–100 (GPGP…PEPS) and 108–119 (VPEPSAPCAPEP). Residues 177-217 (LEESLCPRHLRPLERYCRAERVCLCEACAAQEHRGHELVPL) form a B box-type zinc finger. C182, H185, C204, and H209 together coordinate Zn(2+). Residues 296 to 324 (MLGRSQGDLRRQEEQRSRLSRARQNLSQV) adopt a coiled-coil conformation. 2 disordered regions span residues 300–322 (SQGD…QNLS) and 384–411 (LRGP…LEST). The span at 302 to 312 (GDLRRQEEQRS) shows a compositional bias: basic and acidic residues. The B30.2/SPRY domain maps to 410–631 (STNLLESEAP…LQIGPLKKSC (222 aa)). S461 is subject to Phosphoserine. Residue R582 is modified to Omega-N-methylarginine. S588 is subject to Phosphoserine.

Belongs to the TRIM/RBCC family. Low expression in most tissues. Higher expression in kidney tubular cells. Overexpressed in astrocytoma tumor cells.

The protein localises to the cytoplasm. It is found in the nucleus. It catalyses the reaction S-ubiquitinyl-[E2 ubiquitin-conjugating enzyme]-L-cysteine + [acceptor protein]-L-lysine = [E2 ubiquitin-conjugating enzyme]-L-cysteine + N(6)-ubiquitinyl-[acceptor protein]-L-lysine.. It participates in protein modification; protein ubiquitination. In terms of biological role, E3 ubiquitin-protein ligase that mediates the ubiquitination and proteasomal degradation of CYLD. The chain is E3 ubiquitin-protein ligase TRIM47 from Homo sapiens (Human).